The following is a 234-amino-acid chain: Large ribosomal subunit protein uL1 (234 aa).

This sequence belongs to the universal ribosomal protein uL1 family. Part of the 50S ribosomal subunit.

Binds directly to 23S rRNA. The L1 stalk is quite mobile in the ribosome, and is involved in E site tRNA release. In terms of biological role, protein L1 is also a translational repressor protein, it controls the translation of the L11 operon by binding to its mRNA. In Aliivibrio fischeri (strain ATCC 700601 / ES114) (Vibrio fischeri), this protein is Large ribosomal subunit protein uL1.